The chain runs to 464 residues: MSTMSARDNEKGSARSQPSHAAASEIENVPRPSRQQSWTGTMIKVFIICACAGIVSKYIIPLDSIFKSVHIDPHDYATRANRILSTTPLIDGHNDLPYLIRLETKNKIYDHEKLPFRTGLLSHTDQIKIQEGKLGGQFWSVFVECATDPNAEIDDPTWAVRDTLEQIDVTKRLVQEYPDLLEYCESASCAKAAFKRGKVGSFLGIEGGHQIGNSLASLRQVYDLGVRYITVTHNCDNAFATAASTVAVGKPDLGLTDFGREFVKEMNRLGMLVDLSHVSHQTMRDILSVTKAPVMFSHSSSYALSKHLRNVPDDVLNGVTKNGGVVMVTFVPSFLKVDDPASATIHDAVDHILHVAKVAGWDHVGIGSDFDGTADVPEGLENVSKYPRLIELLLERGVTDEQARKLIGENILRVWSNVEEIAENIRALGEKPNEETWSGRKWTAAIDIPMPFMFKDSADKRKEL.

Residues 1-34 are disordered; it reads MSTMSARDNEKGSARSQPSHAAASEIENVPRPSR. A helical membrane pass occupies residues 40 to 56; it reads GTMIKVFIICACAGIVS. Zn(2+)-binding residues include H93, D95, and E206. C145 and C235 are joined by a disulfide. H233 contributes to the substrate binding site. Positions 277 and 298 each coordinate Zn(2+). Positions 309 and 369 each coordinate substrate. N382 carries N-linked (GlcNAc...) asparagine glycosylation.

The protein belongs to the metallo-dependent hydrolases superfamily. Peptidase M19 family. Zn(2+) is required as a cofactor.

It is found in the membrane. It carries out the reaction an L-aminoacyl-L-amino acid + H2O = 2 an L-alpha-amino acid. In terms of biological role, hydrolyzes a wide range of dipeptides. The polypeptide is Putative dipeptidase CPC735_014430 (Coccidioides posadasii (strain C735) (Valley fever fungus)).